The sequence spans 320 residues: ATP-dependent 6-phosphofructokinase (320 aa).

Glycine 12 lines the ATP pocket. An ADP-binding site is contributed by 22–26 (RGVVR). ATP is bound by residues 73–74 (RF) and 103–106 (GDGS). Residue aspartate 104 coordinates Mg(2+). Position 126 to 128 (126 to 128 (TID)) interacts with substrate. Residue aspartate 128 is the Proton acceptor of the active site. Arginine 155 is an ADP binding site. Residues arginine 163 and 170 to 172 (MGR) contribute to the substrate site. Residues 186–188 (GCE), lysine 212, and 214–216 (KKH) each bind ADP. Residues glutamate 223, arginine 244, and 250–253 (HIQR) each bind substrate.

Belongs to the phosphofructokinase type A (PFKA) family. ATP-dependent PFK group I subfamily. Prokaryotic clade 'B1' sub-subfamily. Homotetramer. Mg(2+) serves as cofactor.

It localises to the cytoplasm. The catalysed reaction is beta-D-fructose 6-phosphate + ATP = beta-D-fructose 1,6-bisphosphate + ADP + H(+). The protein operates within carbohydrate degradation; glycolysis; D-glyceraldehyde 3-phosphate and glycerone phosphate from D-glucose: step 3/4. With respect to regulation, allosterically activated by ADP and other diphosphonucleosides, and allosterically inhibited by phosphoenolpyruvate. Functionally, catalyzes the phosphorylation of D-fructose 6-phosphate to fructose 1,6-bisphosphate by ATP, the first committing step of glycolysis. This Blochmanniella floridana protein is ATP-dependent 6-phosphofructokinase.